The following is a 142-amino-acid chain: Thioredoxin-like protein YLS8 (142 aa).

The protein belongs to the DIM1 family. In terms of tissue distribution, expressed in roots, leaves, stems, cauline leaves and flowers.

This chain is Thioredoxin-like protein YLS8 (YLS8), found in Arabidopsis thaliana (Mouse-ear cress).